The primary structure comprises 1233 residues: Structural maintenance of chromosomes protein 1A (1233 aa).

An ATP-binding site is contributed by 32 to 39 (GPNGSGKS). Coiled-coil stretches lie at residues 104-124 (EYKINNKVVQLHEYSEELEKL) and 163-503 (ELAQ…KAEI). Residues 284–293 (IKEKDSELNQ) show a composition bias toward basic and acidic residues. Disordered regions lie at residues 284–308 (IKEKDSELNQKRPQYIKAKENTSHK) and 348–369 (QEFEERMEEESQSQGRDLTLEE). Phosphoserine is present on residues Ser358 and Ser360. Positions 515 to 629 (VYGRLIDLCQ…DNVEDARRIA (115 aa)) constitute an SMC hinge domain. An N6-acetyllysine mark is found at Lys648 and Lys713. Residues 667–935 (DEKAVDKLKE…RHNLLQACKM (269 aa)) are a coiled coil. A disordered region spans residues 947-969 (MDDISQEEGSSQGEESVSGSQRT). Low complexity predominate over residues 953–967 (EEGSSQGEESVSGSQ). 4 positions are modified to phosphoserine: Ser957, Ser962, Ser966, and Ser970. Residues 988 to 1068 (EDLKDAQAEE…FEQIKKERFD (81 aa)) adopt a coiled-coil conformation. Lys1037 carries the N6-acetyllysine modification.

The protein belongs to the SMC family. SMC1 subfamily. As to quaternary structure, forms a heterodimer with SMC3 in cohesin complexes. Cohesin complexes are composed of the SMC1 (SMC1A or SMC1B) and SMC3 heterodimer attached via their SMC hinge domain, RAD21 which link them, and one STAG protein (STAG1, STAG2 or STAG3), which interacts with RAD21. In germ cell cohesin complexes, SMC1A is mutually exclusive with SMC1B. Interacts with STAG3. Found in a complex with CDCA5, SMC3 and RAD21, PDS5A/SCC-112 and PDS5B/APRIN. Found in a complex containing POLE and SMC3. Interacts with BRCA1, SYCP2, NDC80, RPGR and BRAT1. The cohesin complex interacts with the cohesin loading complex subunits NIPBL/Scc2 (via HEAT repeats) and MAU2/Scc4. NIPBL directly contacts all members of the complex, RAD21, SMC1A/B, SMC3 and STAG1. In terms of processing, phosphorylated upon ionizing radiation or DNA methylation. Phosphorylation of Ser-957 and Ser-966 activates it and is required for S-phase checkpoint activation. Post-translationally, ubiquitinated by the DCX(DCAF15) complex, leading to its degradation. Ubiquitous (at protein level).

Its subcellular location is the nucleus. The protein localises to the chromosome. It is found in the centromere. Involved in chromosome cohesion during cell cycle and in DNA repair. Involved in DNA repair via its interaction with BRCA1 and its related phosphorylation by ATM, and works as a downstream effector in the ATM/NBS1 branch of S-phase checkpoint. Central component of cohesin complex. The cohesin complex is required for the cohesion of sister chromatids after DNA replication. The cohesin complex apparently forms a large proteinaceous ring within which sister chromatids can be trapped. At anaphase, the complex is cleaved and dissociates from chromatin, allowing sister chromatids to segregate. The cohesin complex may also play a role in spindle pole assembly during mitosis. Involved in DNA repair via its interaction with BRCA1 and its related phosphorylation by ATM, or via its phosphorylation by ATR. Works as a downstream effector both in the ATM/NBS1 branch and in the ATR/MSH2 branch of S-phase checkpoint. In Mus musculus (Mouse), this protein is Structural maintenance of chromosomes protein 1A (Smc1a).